A 465-amino-acid polypeptide reads, in one-letter code: ATP synthase subunit beta (465 aa).

148–155 (GGAGVGKT) contacts ATP.

It belongs to the ATPase alpha/beta chains family. As to quaternary structure, F-type ATPases have 2 components, CF(1) - the catalytic core - and CF(0) - the membrane proton channel. CF(1) has five subunits: alpha(3), beta(3), gamma(1), delta(1), epsilon(1). CF(0) has three main subunits: a(1), b(2) and c(9-12). The alpha and beta chains form an alternating ring which encloses part of the gamma chain. CF(1) is attached to CF(0) by a central stalk formed by the gamma and epsilon chains, while a peripheral stalk is formed by the delta and b chains.

It is found in the cell inner membrane. It catalyses the reaction ATP + H2O + 4 H(+)(in) = ADP + phosphate + 5 H(+)(out). Produces ATP from ADP in the presence of a proton gradient across the membrane. The catalytic sites are hosted primarily by the beta subunits. The chain is ATP synthase subunit beta from Neisseria meningitidis serogroup A / serotype 4A (strain DSM 15465 / Z2491).